The chain runs to 211 residues: tRNA (guanine-N(7)-)-methyltransferase (211 aa).

S-adenosyl-L-methionine-binding residues include E44, D69, D96, and D118. D118 is a catalytic residue. K122 lines the substrate pocket. The segment at 124–129 (KHEKRR) is interaction with RNA. Residues D154 and 191-194 (TEYE) each bind substrate.

The protein belongs to the class I-like SAM-binding methyltransferase superfamily. TrmB family.

The catalysed reaction is guanosine(46) in tRNA + S-adenosyl-L-methionine = N(7)-methylguanosine(46) in tRNA + S-adenosyl-L-homocysteine. Its pathway is tRNA modification; N(7)-methylguanine-tRNA biosynthesis. Functionally, catalyzes the formation of N(7)-methylguanine at position 46 (m7G46) in tRNA. This is tRNA (guanine-N(7)-)-methyltransferase from Streptococcus agalactiae serotype Ia (strain ATCC 27591 / A909 / CDC SS700).